Consider the following 155-residue polypeptide: Small ribosomal subunit protein uS7c (155 aa).

Belongs to the universal ribosomal protein uS7 family. Part of the 30S ribosomal subunit.

Its subcellular location is the plastid. The protein resides in the chloroplast. One of the primary rRNA binding proteins, it binds directly to 16S rRNA where it nucleates assembly of the head domain of the 30S subunit. The protein is Small ribosomal subunit protein uS7c (rps7) of Sagittaria latifolia (Broadleaf arrowhead).